Here is a 243-residue protein sequence, read N- to C-terminus: MAVQISKKRKFVADGIFKAELNEFLTRELAEDGYSGVEVRVTPTRTEIIILATRTQNVLGEKGRRIRELTAVVQKRFGFPEGSVELYAEKVATRGLCAIAQAESLRYKLLGGLAVRRACYGVLRFIMESGAKGCEVVVSGKLRGQRAKSMKFVDGLMIHSGDPVNYYVDTAVRHVLLRQGVLGIKVKIMLPWDPTGKIGPKKPLPDHVSIVEPKDEILPTTPISEQKGGKPEPPAMPQPVPTA.

A2 bears the N-acetylalanine mark. Phosphoserine; by PKC/PRKCD is present on S6. The KH type-2 domain maps to 21-92 (LNEFLTRELA…SVELYAEKVA (72 aa)). Residue S35 is modified to Phosphoserine. T42 carries the phosphothreonine; by MAPK modification. K62 carries the N6-acetyllysine modification. An asymmetric dimethylarginine; by PRMT1 mark is found at R64, R65, and R67. T70 is modified (phosphothreonine; by PKB). A Glycyl lysine isopeptide (Lys-Gly) (interchain with G-Cter in ubiquitin) cross-link involves residue K90. Position 104 is a phosphoserine (S104). N6-succinyllysine is present on K132. K202 participates in a covalent cross-link: Glycyl lysine isopeptide (Lys-Gly) (interchain with G-Cter in ubiquitin). S209 is modified (phosphoserine; by IKKB). K214 participates in a covalent cross-link: Glycyl lysine isopeptide (Lys-Gly) (interchain with G-Cter in SUMO2); alternate. K214 is covalently cross-linked (Glycyl lysine isopeptide (Lys-Gly) (interchain with G-Cter in ubiquitin); alternate). The disordered stretch occupies residues 214 to 243 (KDEILPTTPISEQKGGKPEPPAMPQPVPTA). T220 is modified (phosphothreonine). Position 221 is a phosphothreonine; by CDK1 and PKC/PRKCD (T221). Residue S224 is modified to Phosphoserine. A Glycyl lysine isopeptide (Lys-Gly) (interchain with G-Cter in SUMO2) cross-link involves residue K230. Residues 231–243 (PEPPAMPQPVPTA) show a composition bias toward pro residues. T242 is subject to Phosphothreonine.

The protein belongs to the universal ribosomal protein uS3 family. As to quaternary structure, component of the 40S small ribosomal subunit. Identified in a IGF2BP1-dependent mRNP granule complex containing untranslated mRNAs. Interacts with HNRPD. Interacts with PRMT1; the interaction methylates RPS3. Interacts with SUMO1; the interaction sumoylates RPS3. Interacts with UBC9. Interacts with CDK1; the interaction phosphorylates RPS3. Interacts with PRKCD; the interaction phosphorylates RPS3. Interacts with PKB/AKT; the interaction phosphorylates RPS3. Interacts with E2F1; the interaction occurs in the absence of nerve growth factor and increases transcription of pro-apoptotic proteins BCL2L11/BIM and HRK/Dp5. Interacts with the base excision repair proteins APEX1 and OGG1; interaction with OGG1 increases OGG1 N-glycosylase activity. Interacts with UNG; the interaction increases the uracil excision activity of UNG1. Interacts with HSP90; the interaction prevents the ubiquitination and proteasome-dependent degradation of RPS3 and is suppressed by increased ROS levels. Interacts with TOM70; the interaction promotes translocation of RPS3 to the mitochondrion. Interacts (via N-terminus) with RELA (via N-terminus); the interaction enhances the DNA-binding activity of the NF-kappa-B p65-p50 complex. Interacts with NFKBIA; the interaction is direct and may bridge the interaction between RPS3 and RELA. Interacts with IKKB; the interaction phosphorylates RPS3 and enhances its translocation to the nucleus. Interacts (via KH domain) with MDM2 and TP53. Interacts with TRADD. Interacts with CRY1. Post-translationally, methylation by PRMT1 is required for import into the nucleolus and for ribosome assembly. Sumoylation by SUMO1 enhances protein stability through increased resistance to proteolysis. Sumoylation occurs at one or more of the three consensus sites, Lys-18, Lys-214 and Lys-230. In terms of processing, phosphorylation at Thr-221 by CDK1 occurs mainly in G2/M phase. Phosphorylation by PRKCD occurs on a non-ribosomal-associated form which results in translocation of RPS3 to the nucleus and enhances its endonuclease activity. Phosphorylated on Ser-209 by IKKB in response to activation of the NF-kappa-B p65-p50 complex which enhances the association of RPS3 with importin-alpha and mediates the nuclear translocation of RPS3. Phosphorylation by MAPK is required for translocation to the nucleus following exposure of cells to DNA damaging agents such as hydrogen peroxide. Phosphorylation by PKB/AKT mediates RPS3 nuclear translocation, enhances RPS3 endonuclease activity and suppresses RPS3-induced neuronal apoptosis. Post-translationally, ubiquitinated; ubiquitination is prevented by interaction with HSP90 which stabilizes the protein. Monoubiquitinated at Lys-214 by RNF10 and ZNF598 when a ribosome has stalled during translation of poly(A) sequences, leading to preclude synthesis of a long poly-lysine tail and initiate the ribosome quality control (RQC) pathway to degrade the potentially detrimental aberrant nascent polypeptide. Deubiquitinated at Lys-214 by USP10, preventing degradation by the proteasome and promoting 40S ribosome subunit recycling following ribosome dissociation. Ufmylated by UFL1.

The protein localises to the cytoplasm. It is found in the nucleus. The protein resides in the nucleolus. It localises to the mitochondrion inner membrane. Its subcellular location is the cytoskeleton. The protein localises to the spindle. It catalyses the reaction 2'-deoxyribonucleotide-(2'-deoxyribose 5'-phosphate)-2'-deoxyribonucleotide-DNA = a 3'-end 2'-deoxyribonucleotide-(2,3-dehydro-2,3-deoxyribose 5'-phosphate)-DNA + a 5'-end 5'-phospho-2'-deoxyribonucleoside-DNA + H(+). Functionally, component of the small ribosomal subunit. The ribosome is a large ribonucleoprotein complex responsible for the synthesis of proteins in the cell. Has endonuclease activity and plays a role in repair of damaged DNA. Cleaves phosphodiester bonds of DNAs containing altered bases with broad specificity and cleaves supercoiled DNA more efficiently than relaxed DNA. Displays high binding affinity for 7,8-dihydro-8-oxoguanine (8-oxoG), a common DNA lesion caused by reactive oxygen species (ROS). Has also been shown to bind with similar affinity to intact and damaged DNA. Stimulates the N-glycosylase activity of the base excision protein OGG1. Enhances the uracil excision activity of UNG1. Also stimulates the cleavage of the phosphodiester backbone by APEX1. When located in the mitochondrion, reduces cellular ROS levels and mitochondrial DNA damage. Has also been shown to negatively regulate DNA repair in cells exposed to hydrogen peroxide. Plays a role in regulating transcription as part of the NF-kappa-B p65-p50 complex where it binds to the RELA/p65 subunit, enhances binding of the complex to DNA and promotes transcription of target genes. Represses its own translation by binding to its cognate mRNA. Binds to and protects TP53/p53 from MDM2-mediated ubiquitination. Involved in spindle formation and chromosome movement during mitosis by regulating microtubule polymerization. Involved in induction of apoptosis through its role in activation of CASP8. Induces neuronal apoptosis by interacting with the E2F1 transcription factor and acting synergistically with it to up-regulate pro-apoptotic proteins BCL2L11/BIM and HRK/Dp5. Interacts with TRADD following exposure to UV radiation and induces apoptosis by caspase-dependent JNK activation. This chain is Small ribosomal subunit protein uS3 (RPS3), found in Bos taurus (Bovine).